We begin with the raw amino-acid sequence, 114 residues long: uncharacterized protein (114 aa).

This is an uncharacterized protein from Methanocaldococcus jannaschii (strain ATCC 43067 / DSM 2661 / JAL-1 / JCM 10045 / NBRC 100440) (Methanococcus jannaschii).